The sequence spans 333 residues: MLILGIDTSCDDTSVAVLENRNILSNIVSSQIKFHSKYGGIVPEIASRKHIEWIWDVTEKALSEAKTDLKDIDLIAVCYGPGLIGSLLVGLCFAKSLSYASGKPLVGVNHIEGHIQAIFLEKSYPEYPFLCLIVSGGHTSLYRVNDFGAYKELGRTRDDAAGEAYDKVAKMLGLGYPGGPVIDALAKEGCNEKFNLPRPYLHGSLDFSFSGLKTAIKVLLKNLGYKEGNVPDEIKKDIAASFQTSVVDVLIEKIKWAISSEKLNRVVITGGVAANSELRRRAEMLKDKGINVYLPSKSLCTDNAAMIAITGYNKFLKGEISDLFLNARAYLPL.

His-110 and His-114 together coordinate Fe cation. Substrate contacts are provided by residues 133–137, Asp-166, Gly-179, Asp-183, and Asn-275; that span reads IVSGG. Asp-302 is a Fe cation binding site.

Belongs to the KAE1 / TsaD family. Fe(2+) is required as a cofactor.

It is found in the cytoplasm. It carries out the reaction L-threonylcarbamoyladenylate + adenosine(37) in tRNA = N(6)-L-threonylcarbamoyladenosine(37) in tRNA + AMP + H(+). Functionally, required for the formation of a threonylcarbamoyl group on adenosine at position 37 (t(6)A37) in tRNAs that read codons beginning with adenine. Is involved in the transfer of the threonylcarbamoyl moiety of threonylcarbamoyl-AMP (TC-AMP) to the N6 group of A37, together with TsaE and TsaB. TsaD likely plays a direct catalytic role in this reaction. This Thermodesulfovibrio yellowstonii (strain ATCC 51303 / DSM 11347 / YP87) protein is tRNA N6-adenosine threonylcarbamoyltransferase.